The sequence spans 29 residues: Glucagon (29 aa).

This sequence belongs to the glucagon family.

It is found in the secreted. In terms of biological role, glucagon plays a key role in glucose metabolism and homeostasis. Regulates blood glucose by increasing gluconeogenesis and decreasing glycolysis. The protein is Glucagon (gcg) of Lampetra fluviatilis (European river lamprey).